Here is a 172-residue protein sequence, read N- to C-terminus: Type IV secretion system putative outer membrane lipoprotein BRA0058/BS1330_II0058 (172 aa).

The first 15 residues, 1–15 (MRTLVMVACAVSLAA), serve as a signal peptide directing secretion. Cys-16 is lipidated: N-palmitoyl cysteine. Cys-16 carries the S-diacylglycerol cysteine lipid modification. The OmpA-like domain maps to 58–172 (WPARPPKQTV…RRVDIEILRK (115 aa)).

The protein resides in the cell outer membrane. In terms of biological role, the VirB system could be required for the establishment of the replication niche in the host. The chain is Type IV secretion system putative outer membrane lipoprotein BRA0058/BS1330_II0058 from Brucella suis biovar 1 (strain 1330).